The chain runs to 287 residues: Elongation factor Ts (287 aa).

The segment at 81–84 (TDFV) is involved in Mg(2+) ion dislocation from EF-Tu.

It belongs to the EF-Ts family.

It is found in the cytoplasm. Functionally, associates with the EF-Tu.GDP complex and induces the exchange of GDP to GTP. It remains bound to the aminoacyl-tRNA.EF-Tu.GTP complex up to the GTP hydrolysis stage on the ribosome. The polypeptide is Elongation factor Ts (Nitratidesulfovibrio vulgaris (strain ATCC 29579 / DSM 644 / CCUG 34227 / NCIMB 8303 / VKM B-1760 / Hildenborough) (Desulfovibrio vulgaris)).